A 379-amino-acid polypeptide reads, in one-letter code: Alcohol dehydrogenase 2 (379 aa).

Zn(2+)-binding residues include Cys47, Thr49, His69, Cys99, Cys102, Cys105, Cys113, and Cys177. An alcohol-binding residues include Thr49 and His69. NAD(+) is bound at residue Thr49. NAD(+)-binding positions include 202 to 207 (GLGAVG), Asp226, Lys231, Thr272, Val295, 295 to 297 (VGV), Phe322, and Arg372.

The protein belongs to the zinc-containing alcohol dehydrogenase family. In terms of assembly, homodimer. Zn(2+) serves as cofactor.

The protein localises to the cytoplasm. The enzyme catalyses a primary alcohol + NAD(+) = an aldehyde + NADH + H(+). It carries out the reaction a secondary alcohol + NAD(+) = a ketone + NADH + H(+). This chain is Alcohol dehydrogenase 2 (ADH2), found in Zea mays (Maize).